Consider the following 84-residue polypeptide: Small ribosomal subunit protein bS20 (84 aa).

Positions 1–28 are disordered; it reads MPNIKSAIKRVKTAETRNSRNASQRSAM.

The protein belongs to the bacterial ribosomal protein bS20 family.

Functionally, binds directly to 16S ribosomal RNA. This chain is Small ribosomal subunit protein bS20, found in Listeria monocytogenes serotype 4b (strain CLIP80459).